Here is a 254-residue protein sequence, read N- to C-terminus: ATP-dependent L-serine kinase SbnI (254 aa).

E20 is a catalytic residue. Residue S33 participates in ADP binding. I57 is an O-phospho-L-serine binding site. ADP contacts are provided by D58, G59, H61, and R62. Residues G59 and H61 each coordinate O-phospho-L-serine. O-phospho-L-serine contacts are provided by W98 and R229.

As to quaternary structure, forms dimers and tetramers in solution. Predominantly forms dimers. Dimerization/oligomerization is not essential for kinase activity.

The enzyme catalyses L-serine + ATP = O-phospho-L-serine + ADP + H(+). It functions in the pathway siderophore biosynthesis. With respect to regulation, binds heme and heme binding inhibits DNA binding. In terms of biological role, free serine kinase that uses ATP to phosphorylate L-serine to yield O-phospho-L-serine and ADP. O-phospho-L-serine serves as a substrate for SbnA and is a precursor for staphyloferrin B biosynthesis. Is also a DNA-binding regulatory protein that senses heme to control gene expression for siderophore biosynthesis. Binds to DNA within the sbnC coding region and is required for expression of genes in the sbn operon from sbnD onward. The polypeptide is ATP-dependent L-serine kinase SbnI (Staphylococcus aureus (strain NCTC 8325 / PS 47)).